Consider the following 452-residue polypeptide: Phosphoglucosamine mutase (452 aa).

The Phosphoserine intermediate role is filled by serine 97. Positions 97, 236, 238, and 240 each coordinate Mg(2+). At serine 97 the chain carries Phosphoserine.

This sequence belongs to the phosphohexose mutase family. Mg(2+) serves as cofactor. Activated by phosphorylation.

The catalysed reaction is alpha-D-glucosamine 1-phosphate = D-glucosamine 6-phosphate. In terms of biological role, catalyzes the conversion of glucosamine-6-phosphate to glucosamine-1-phosphate. This is Phosphoglucosamine mutase from Prochlorococcus marinus subsp. pastoris (strain CCMP1986 / NIES-2087 / MED4).